We begin with the raw amino-acid sequence, 179 residues long: Ribosome maturation factor RimM (179 aa).

Residues 102–173 (PEEYHYRDLI…ALHVQPPPGL (72 aa)) enclose the PRC barrel domain.

The protein belongs to the RimM family. Binds ribosomal protein uS19.

The protein localises to the cytoplasm. In terms of biological role, an accessory protein needed during the final step in the assembly of 30S ribosomal subunit, possibly for assembly of the head region. Essential for efficient processing of 16S rRNA. May be needed both before and after RbfA during the maturation of 16S rRNA. It has affinity for free ribosomal 30S subunits but not for 70S ribosomes. In Synechococcus sp. (strain JA-2-3B'a(2-13)) (Cyanobacteria bacterium Yellowstone B-Prime), this protein is Ribosome maturation factor RimM.